Consider the following 221-residue polypeptide: Leucyl/phenylalanyl-tRNA--protein transferase (221 aa).

Belongs to the L/F-transferase family.

Its subcellular location is the cytoplasm. The enzyme catalyses N-terminal L-lysyl-[protein] + L-leucyl-tRNA(Leu) = N-terminal L-leucyl-L-lysyl-[protein] + tRNA(Leu) + H(+). The catalysed reaction is N-terminal L-arginyl-[protein] + L-leucyl-tRNA(Leu) = N-terminal L-leucyl-L-arginyl-[protein] + tRNA(Leu) + H(+). It catalyses the reaction L-phenylalanyl-tRNA(Phe) + an N-terminal L-alpha-aminoacyl-[protein] = an N-terminal L-phenylalanyl-L-alpha-aminoacyl-[protein] + tRNA(Phe). In terms of biological role, functions in the N-end rule pathway of protein degradation where it conjugates Leu, Phe and, less efficiently, Met from aminoacyl-tRNAs to the N-termini of proteins containing an N-terminal arginine or lysine. The polypeptide is Leucyl/phenylalanyl-tRNA--protein transferase (Phenylobacterium zucineum (strain HLK1)).